Consider the following 129-residue polypeptide: Replication initiation control protein YabA (129 aa).

H103, C105, C119, and C122 together coordinate Zn(2+).

Belongs to the YabA family. Homotetramer. Interacts with both DnaA and DnaN, acting as a bridge between these two proteins. Zn(2+) serves as cofactor.

The protein resides in the cytoplasm. It localises to the nucleoid. Its function is as follows. Involved in control of chromosome replication initiation. Inhibits the cooperative binding of DnaA to the oriC region, thus negatively regulating initiation of chromosome replication. Inhibits the ability of DnaA-ATP to form a helix on DNA; does not disassemble preformed DnaA-DNA helices. Decreases the residence time of DnaA on the chromosome at its binding sites (oriC, replication forks and promoter-binding sites). Tethers DnaA to the replication machinery via the DNA polymerase beta sliding clamp subunit (dnaN). Associates with oriC and other DnaA targets on the chromosome in a DnaA-dependent manner. The polypeptide is Replication initiation control protein YabA (Listeria innocua serovar 6a (strain ATCC BAA-680 / CLIP 11262)).